The following is an 865-amino-acid chain: LINE-1 type transposase domain-containing protein 1 (865 aa).

Position 2 is an N-acetylserine (Ser-2). Ser-2 bears the Phosphoserine mark. Thr-149 is subject to Phosphothreonine. Ser-154 carries the post-translational modification Phosphoserine. A disordered region spans residues 370–508; the sequence is EMKNLETQEE…EKKASRRQKE (139 aa). Composition is skewed to acidic residues over residues 376–440 and 472–483; these read TQEE…EQTS and SVEDSESEEEEE. A phosphoserine mark is found at Ser-472, Ser-476, and Ser-478. The segment covering 498–508 has biased composition (basic and acidic residues); sequence TEKKASRRQKE. A phosphoserine mark is found at Ser-518, Ser-561, and Ser-573. Positions 590–608 are enriched in basic and acidic residues; that stretch reads EEKKHRTLHTEELTSKEAD. The segment at 590–612 is disordered; it reads EEKKHRTLHTEELTSKEADLTEE. Residues Ser-640, Ser-648, and Ser-665 each carry the phosphoserine modification. Positions 642-684 form a coiled coil; that stretch reads VLEIENSVDDLSSRMDILEERIDSLEDQIEEFSKDTMQMTKQI.

This sequence belongs to the transposase 22 family.

The polypeptide is LINE-1 type transposase domain-containing protein 1 (L1TD1) (Homo sapiens (Human)).